Here is a 501-residue protein sequence, read N- to C-terminus: Mitogen-activated protein kinase MKC1 (501 aa).

The 312-residue stretch at 28-339 folds into the Protein kinase domain; it reads FKIVKELGHG…VRDALNHKYL (312 aa). ATP-binding positions include 34-42 and K74; that span reads LGHGAYGIV. The active-site Proton acceptor is the D174. Residue T211 is modified to Phosphothreonine. The TXY signature appears at 211 to 213; it reads TEY. Y213 carries the phosphotyrosine modification. The segment at 400–450 is disordered; sequence MQKREEQRQEEEEKELLEQQRQFPAQESMDISQTPYNNLETNIGTPQVEDD. Over residues 422–444 the composition is skewed to polar residues; that stretch reads FPAQESMDISQTPYNNLETNIGT.

The protein belongs to the protein kinase superfamily. CMGC Ser/Thr protein kinase family. MAP kinase subfamily. Requires Mg(2+) as cofactor. Post-translationally, dually phosphorylated on Thr-211 and Tyr-213, which activates the enzyme.

The catalysed reaction is L-seryl-[protein] + ATP = O-phospho-L-seryl-[protein] + ADP + H(+). The enzyme catalyses L-threonyl-[protein] + ATP = O-phospho-L-threonyl-[protein] + ADP + H(+). Activated by tyrosine and threonine phosphorylation. The polypeptide is Mitogen-activated protein kinase MKC1 (MKC1) (Candida albicans (Yeast)).